Reading from the N-terminus, the 181-residue chain is Large ribosomal subunit protein eL18 (181 aa).

This sequence belongs to the eukaryotic ribosomal protein eL18 family.

The protein localises to the cytoplasm. The chain is Large ribosomal subunit protein eL18 (rpl18) from Dictyostelium discoideum (Social amoeba).